The sequence spans 873 residues: Potassium voltage-gated channel subfamily KQT member 3 (873 aa).

Residues 1-41 are disordered; the sequence is MGLKARRAAGAAGGGGGEGGGGGGGAANPAGGDSAVAGDEE. The Cytoplasmic portion of the chain corresponds to 1–121; sequence MGLKARRAAG…IYDALERPRG (121 aa). Gly residues predominate over residues 11 to 26; sequence AAGGGGGEGGGGGGGA. T82 carries the post-translational modification Phosphothreonine. Residues 122-144 traverse the membrane as a helical segment; the sequence is WALLYHALVFLIVLGCLILAVLT. The Extracellular portion of the chain corresponds to 145–154; the sequence is TFKEYETVSG. Residues 155 to 176 form a helical membrane-spanning segment; that stretch reads DWLLLLETFAIFIFGAEFALRI. The Cytoplasmic portion of the chain corresponds to 177–194; that stretch reads WAAGCCCRYKGWRGRLKF. The chain crosses the membrane as a helical span at residues 195-214; it reads ARKPLCMLDIFVLIASVPVV. The Extracellular segment spans residues 215-226; the sequence is AVGNQGNVLATS. The chain crosses the membrane as a helical; Voltage-sensor span at residues 227–245; it reads LRSLRFLQILRMLRMDRRG. R244 lines the a 1,2-diacyl-sn-glycero-3-phospho-(1D-myo-inositol-4,5-bisphosphate) pocket. Residues 246–257 are Cytoplasmic-facing; it reads GTWKLLGSAICA. The helical transmembrane segment at 258–283 threads the bilayer; the sequence is HSKELITAWYIGFLTLILSSFLVYLV. K260 serves as a coordination point for a 1,2-diacyl-sn-glycero-3-phospho-(1D-myo-inositol-4,5-bisphosphate). At 284 to 303 the chain is on the extracellular side; it reads EKDVPEMDAQGEEMKEEFET. Positions 304–316 form an intramembrane region, pore-forming; it reads YADALWWGLITLA. A Selectivity filter motif is present at residues 317-322; the sequence is TIGYGD. The Extracellular segment spans residues 317-327; the sequence is TIGYGDKTPKT. Residues 328–354 form a helical membrane-spanning segment; the sequence is WEGRLIAATFSLIGVSFFALPAGILGS. Residues 355-873 are Cytoplasmic-facing; sequence GLALKVQEQH…SIWTPSNKPT (519 aa). The mediates interaction with calmodulin stretch occupies residues 357–538; it reads ALKVQEQHRQ…RLYKKKFKET (182 aa). Residue K367 participates in a 1,2-diacyl-sn-glycero-3-phospho-(1D-myo-inositol-4,5-bisphosphate) binding. Disordered stretches follow at residues 575–603, 723–742, and 766–873; these read PGPPSTPKHKKSQKGSAFTYPSQQSPRNE, RGGPSSTKAQANLPSSGSTY, and ELQG…NKPT. Composition is skewed to polar residues over residues 588–601, 725–741, and 844–873; these read KGSAFTYPSQQSPR, GPSSTKAQANLPSSGST, and DPFTPSGSMPMSSTGDGISDSIWTPSNKPT.

This sequence belongs to the potassium channel family. KQT (TC 1.A.1.15) subfamily. Kv7.3/KCNQ3 sub-subfamily. Heterotetramer with KCNQ2; forms heterotetrameric native M-channel responsible for the M-current. Interacts with calmodulin; the interaction is calcium-independent, constitutive and participates in the proper assembly of a functional M-channel. Heteromultimer with KCNQ5. May associate with KCNE2. Interacts with IQCJ-SCHIP1. Interacts (via the pore module) with SLC5A3/SMIT1; forms a coregulatory complex that alters ion selectivity, voltage dependence and gating kinetics of the channel. In terms of processing, KCNQ2/KCNQ3 are ubiquitinated by NEDD4L. Ubiquitination leads to protein degradation. Degradation induced by NEDD4L is inhibited by USP36. As to expression, expressed in dorsal root ganglion (DRG) neurons.

It localises to the cell membrane. It carries out the reaction K(+)(in) = K(+)(out). The catalysed reaction is Rb(+)(in) = Rb(+)(out). The enzyme catalyses Cs(+)(in) = Cs(+)(out). It catalyses the reaction Na(+)(in) = Na(+)(out). Phosphatidylinositol-4,5-bisphosphate (PIP2) potentiates the activation of KCNQ channels by enhancing the electro-mechanical coupling of the voltage-sensing domain (VSD) and the pore-forming domain (PD). In the closed state of the channel, PIP2 is anchored at the S2-S3 loop; upon channel activation, PIP2 interacts with the S4-S5 linker and is involved in channel gating. Calcium suppresses KCNQ2-KCNQ3 channel currents, with calcium-bound calmodulin inducing a change in channel configuration which leads to the reduction of channel affinity for PIP2 and subsequent current suppression. In terms of biological role, pore-forming subunit of the voltage-gated potassium (Kv) M-channel which is responsible for the M-current, a key controller of neuronal excitability. M-channel is composed of pore-forming subunits KCNQ2 and KCNQ3 assembled as heterotetramers. The native M-current has a slowly activating and deactivating potassium conductance which plays a critical role in determining the subthreshold electrical excitability of neurons as well as the responsiveness to synaptic inputs. M-channel is selectively permeable in vitro to other cations besides potassium, in decreasing order of affinity K(+) &gt; Rb(+) &gt; Cs(+) &gt; Na(+). M-channel association with SLC5A3/SMIT1 alters channel ion selectivity, increasing Na(+) and Cs(+) permeation relative to K(+). Suppressed by activation of M1 muscarinic acetylcholine receptors. KCNQ3 also associates with KCNQ5 to form a functional channel in vitro and may also contribute to the M-current in brain. The polypeptide is Potassium voltage-gated channel subfamily KQT member 3 (Mus musculus (Mouse)).